Consider the following 324-residue polypeptide: Archaeosine synthase subunit beta (324 aa).

Residues 12-254 (GKPGTALFII…LIWAKRKFPN (243 aa)) form the Radical SAM core domain. [4Fe-4S] cluster is bound by residues C27, C36, and C39.

Belongs to the radical SAM superfamily. RaSEA family. In terms of assembly, forms a robust complex with the archaeosine synthase alpha subunit ArcS, likely an alpha(2)beta(2) heterotetrameric structure. The cofactor is [4Fe-4S] cluster.

It catalyses the reaction 7-N-[(5S)-5-amino-5-carboxypentyl]formamidino-7-deazaguanosine(15) in tRNA + S-adenosyl-L-methionine = archaeosine(15) in tRNA + L-1-piperideine-6-carboxylate + 5'-deoxyadenosine + L-methionine + 2 H(+). Its pathway is tRNA modification; archaeosine-tRNA biosynthesis. Functionally, radical SAM enzyme involved in the synthesis of archaeosine, a modified nucleoside present in the dihydrouridine loop (D-loop) of archaeal tRNAs. Catalyzes the cleavage of the C(epsilon)-N bond of the lysine moiety of q0kN15-tRNA, leading to the formation of archaeosine at position 15 in tRNAs. In Thermococcus kodakarensis (strain ATCC BAA-918 / JCM 12380 / KOD1) (Pyrococcus kodakaraensis (strain KOD1)), this protein is Archaeosine synthase subunit beta.